The following is a 443-amino-acid chain: ATP-dependent protease ATPase subunit HslU (443 aa).

ATP-binding positions include Ile-18, 60 to 65 (GVGKTE), Asp-256, Glu-321, and Arg-393.

Belongs to the ClpX chaperone family. HslU subfamily. A double ring-shaped homohexamer of HslV is capped on each side by a ring-shaped HslU homohexamer. The assembly of the HslU/HslV complex is dependent on binding of ATP.

It localises to the cytoplasm. ATPase subunit of a proteasome-like degradation complex; this subunit has chaperone activity. The binding of ATP and its subsequent hydrolysis by HslU are essential for unfolding of protein substrates subsequently hydrolyzed by HslV. HslU recognizes the N-terminal part of its protein substrates and unfolds these before they are guided to HslV for hydrolysis. This chain is ATP-dependent protease ATPase subunit HslU, found in Shigella dysenteriae serotype 1 (strain Sd197).